The primary structure comprises 417 residues: Gamma-glutamyl phosphate reductase (417 aa).

Belongs to the gamma-glutamyl phosphate reductase family.

Its subcellular location is the cytoplasm. The enzyme catalyses L-glutamate 5-semialdehyde + phosphate + NADP(+) = L-glutamyl 5-phosphate + NADPH + H(+). The protein operates within amino-acid biosynthesis; L-proline biosynthesis; L-glutamate 5-semialdehyde from L-glutamate: step 2/2. In terms of biological role, catalyzes the NADPH-dependent reduction of L-glutamate 5-phosphate into L-glutamate 5-semialdehyde and phosphate. The product spontaneously undergoes cyclization to form 1-pyrroline-5-carboxylate. This Escherichia coli O8 (strain IAI1) protein is Gamma-glutamyl phosphate reductase.